The following is a 138-amino-acid chain: Acidic phospholipase A2 BITP01A (138 aa).

Residues 1 to 16 (MRTLWIMAVLLVGVEG) form the signal peptide. 7 disulfide bridges follow: cysteine 42–cysteine 131, cysteine 44–cysteine 60, cysteine 59–cysteine 111, cysteine 65–cysteine 138, cysteine 66–cysteine 104, cysteine 73–cysteine 97, and cysteine 91–cysteine 102. Tyrosine 43, glycine 45, and glycine 47 together coordinate Ca(2+). Histidine 63 is a catalytic residue. A Ca(2+)-binding site is contributed by aspartate 64. Aspartate 105 is an active-site residue.

The cofactor is Ca(2+). As to expression, expressed by the venom gland.

It localises to the secreted. It carries out the reaction a 1,2-diacyl-sn-glycero-3-phosphocholine + H2O = a 1-acyl-sn-glycero-3-phosphocholine + a fatty acid + H(+). Functionally, snake venom phospholipase A2 (PLA2) that induces edema in mice, produces neuromuscular blockade in chick biventer cervicis, increases CK release and produces myonecrosis. PLA2 catalyzes the calcium-dependent hydrolysis of the 2-acyl groups in 3-sn-phosphoglycerides. The sequence is that of Acidic phospholipase A2 BITP01A from Bothrops insularis (Golden lancehead).